The following is a 340-amino-acid chain: Methionine import ATP-binding protein MetN (340 aa).

The ABC transporter domain maps to 8–246; sequence ISVKNLNKEI…PYSSITEELF (239 aa). Residue 40 to 47 participates in ATP binding; that stretch reads GHSGSGKS.

It belongs to the ABC transporter superfamily. Methionine importer (TC 3.A.1.24) family. As to quaternary structure, the complex is composed of two ATP-binding proteins (MetN), two transmembrane proteins (MetI) and a solute-binding protein (MetQ).

Its subcellular location is the cell inner membrane. It carries out the reaction L-methionine(out) + ATP + H2O = L-methionine(in) + ADP + phosphate + H(+). The enzyme catalyses D-methionine(out) + ATP + H2O = D-methionine(in) + ADP + phosphate + H(+). Part of the ABC transporter complex MetNIQ involved in methionine import. Responsible for energy coupling to the transport system. This chain is Methionine import ATP-binding protein MetN, found in Chlamydia felis (strain Fe/C-56) (Chlamydophila felis).